The chain runs to 118 residues: Phosphoribosyl-AMP cyclohydrolase (118 aa).

Asp-87 is a Mg(2+) binding site. Cys-88 lines the Zn(2+) pocket. 2 residues coordinate Mg(2+): Asp-89 and Asp-91. Residues Cys-104 and Cys-111 each coordinate Zn(2+).

Belongs to the PRA-CH family. Homodimer. Requires Mg(2+) as cofactor. Zn(2+) serves as cofactor.

It is found in the cytoplasm. It carries out the reaction 1-(5-phospho-beta-D-ribosyl)-5'-AMP + H2O = 1-(5-phospho-beta-D-ribosyl)-5-[(5-phospho-beta-D-ribosylamino)methylideneamino]imidazole-4-carboxamide. Its pathway is amino-acid biosynthesis; L-histidine biosynthesis; L-histidine from 5-phospho-alpha-D-ribose 1-diphosphate: step 3/9. Its function is as follows. Catalyzes the hydrolysis of the adenine ring of phosphoribosyl-AMP. This Corynebacterium glutamicum (strain ATCC 13032 / DSM 20300 / JCM 1318 / BCRC 11384 / CCUG 27702 / LMG 3730 / NBRC 12168 / NCIMB 10025 / NRRL B-2784 / 534) protein is Phosphoribosyl-AMP cyclohydrolase.